We begin with the raw amino-acid sequence, 109 residues long: Putative membrane protein insertion efficiency factor (109 aa).

This sequence belongs to the UPF0161 family.

Its subcellular location is the cell inner membrane. In terms of biological role, could be involved in insertion of integral membrane proteins into the membrane. The protein is Putative membrane protein insertion efficiency factor of Rhodopseudomonas palustris (strain BisB18).